The following is a 245-amino-acid chain: Ureidoacrylate amidohydrolase RutB (245 aa).

Asp-41 functions as the Proton acceptor in the catalytic mechanism. Lys-150 is a catalytic residue. Catalysis depends on Cys-183, which acts as the Nucleophile.

It belongs to the isochorismatase family. RutB subfamily.

The catalysed reaction is (Z)-3-ureidoacrylate + H2O + H(+) = (Z)-3-aminoacrylate + NH4(+) + CO2. It carries out the reaction (Z)-3-ureidoacrylate + H2O = (Z)-3-aminoacrylate + carbamate + H(+). The enzyme catalyses (Z)-2-methylureidoacrylate + H2O + H(+) = (Z)-2-methylaminoacrylate + NH4(+) + CO2. Its function is as follows. Hydrolyzes ureidoacrylate to form aminoacrylate and carbamate. The carbamate hydrolyzes spontaneously, thereby releasing one of the nitrogen atoms of the pyrimidine ring as ammonia and one of its carbon atoms as CO2. The polypeptide is Ureidoacrylate amidohydrolase RutB (Pseudomonas syringae pv. syringae (strain B728a)).